The primary structure comprises 140 residues: Sec-independent protein translocase protein TatB (140 aa).

The helical transmembrane segment at 2 to 22 threads the bilayer; the sequence is LPGIGFSELLLIGLAALIIIG. Residues 90–140 form a disordered region; that stretch reads VNSAVMREHPVSPPPPATPPAPPAELPPEAAPHADSQNAPPEADPAKGDRT. Positions 100-119 are enriched in pro residues; it reads VSPPPPATPPAPPAELPPEA.

The protein belongs to the TatB family. The Tat system comprises two distinct complexes: a TatABC complex, containing multiple copies of TatA, TatB and TatC subunits, and a separate TatA complex, containing only TatA subunits. Substrates initially bind to the TatABC complex, which probably triggers association of the separate TatA complex to form the active translocon.

It localises to the cell inner membrane. In terms of biological role, part of the twin-arginine translocation (Tat) system that transports large folded proteins containing a characteristic twin-arginine motif in their signal peptide across membranes. Together with TatC, TatB is part of a receptor directly interacting with Tat signal peptides. TatB may form an oligomeric binding site that transiently accommodates folded Tat precursor proteins before their translocation. The polypeptide is Sec-independent protein translocase protein TatB (Hyphomonas neptunium (strain ATCC 15444)).